Reading from the N-terminus, the 512-residue chain is NAD(P) transhydrogenase subunit alpha (512 aa).

At 1-400 the chain is on the cytoplasmic side; the sequence is MLIGVPRELL…KESKPTDPRV (400 aa). Residues 125-128, Val-175, 195-197, and Gly-225 contribute to the NAD(+) site; these read QALD and DSR. Positions 375 to 394 are disordered; sequence SAQPKQETKAAPVAEKKESK. A run of 2 helical transmembrane segments spans residues 401-421 and 422-442; these read KYGV…VAPA and AFLS…YVVW. Residues 443–451 lie on the Cytoplasmic side of the membrane; sequence NVSHALHTP. The helical transmembrane segment at 452 to 472 threads the bilayer; that stretch reads LMAVTNAISGIIIVGALLQIR. At 473–478 the chain is on the periplasmic side; the sequence is QPTGNL. Residues 479 to 499 form a helical membrane-spanning segment; sequence FIDALAFVAILVASINIFGGF. Residues 500–512 are Cytoplasmic-facing; that stretch reads RVTQRMLAMFRKG.

It belongs to the AlaDH/PNT family. In terms of assembly, heterodimer of an alpha (PntA) and a beta (PntB) chain.

The protein localises to the cell inner membrane. It carries out the reaction NAD(+) + NADPH + H(+)(in) = NADH + NADP(+) + H(+)(out). Functionally, the transhydrogenation between NADH and NADP is coupled to respiration and ATP hydrolysis and functions as a proton pump across the membrane. The chain is NAD(P) transhydrogenase subunit alpha (pntA) from Haemophilus influenzae (strain ATCC 51907 / DSM 11121 / KW20 / Rd).